The primary structure comprises 414 residues: MRYLPEVDPEIYEAIKSEEYREEYHLELIASENFVSRAVLEAQGSVLTNKYAEGYPGKRYYGGCLYVDKVEDIARERVKAIYGAEHANVQPHSGSQANMAVYFVVLNPGDRVLGMNLAHGGHLTHGSPVNFSGKLYNFYFYGVDKNTEMINYDSVWNLAKELKPKLIVAGASAYPRIIDFEKFAQIAEDVGAYFMVDMAHIAGLVAAGLHPSPVPYAHFVTSTTHKTLRGPRGGFILCKKEFAKEIDKAVFPGIQGGPLMHVIAAKAVAFKEAMSPEFKEYQKQIVLNAKAMAEELIKLGYRLVSGGTDNHLMLVDLRDKGITGKEAEKALEEAGITVNKNAIPFDPQPPTITSGIRIGTPALTTRGMKEDEMRYIARLIHEVLSNFKDERVKEKVKKEVEELCKQFPIYRKEN.

(6S)-5,6,7,8-tetrahydrofolate is bound by residues L117 and 121-123 (GHL). N6-(pyridoxal phosphate)lysine is present on K226.

This sequence belongs to the SHMT family. As to quaternary structure, homodimer. It depends on pyridoxal 5'-phosphate as a cofactor.

Its subcellular location is the cytoplasm. The catalysed reaction is (6R)-5,10-methylene-5,6,7,8-tetrahydrofolate + glycine + H2O = (6S)-5,6,7,8-tetrahydrofolate + L-serine. It functions in the pathway one-carbon metabolism; tetrahydrofolate interconversion. It participates in amino-acid biosynthesis; glycine biosynthesis; glycine from L-serine: step 1/1. Catalyzes the reversible interconversion of serine and glycine with tetrahydrofolate (THF) serving as the one-carbon carrier. This reaction serves as the major source of one-carbon groups required for the biosynthesis of purines, thymidylate, methionine, and other important biomolecules. Also exhibits THF-independent aldolase activity toward beta-hydroxyamino acids, producing glycine and aldehydes, via a retro-aldol mechanism. This is Serine hydroxymethyltransferase from Dictyoglomus turgidum (strain DSM 6724 / Z-1310).